The primary structure comprises 119 residues: uncharacterized protein (119 aa).

The protein to T.pallidum TP_0127, TP_0315 and TP_0619.

This is an uncharacterized protein from Treponema pallidum (strain Nichols).